The primary structure comprises 91 residues: Large ribosomal subunit protein bL27 (91 aa).

The protein belongs to the bacterial ribosomal protein bL27 family.

This chain is Large ribosomal subunit protein bL27, found in Deinococcus deserti (strain DSM 17065 / CIP 109153 / LMG 22923 / VCD115).